We begin with the raw amino-acid sequence, 248 residues long: PF03932 family protein CutC (248 aa).

The protein belongs to the CutC family. As to quaternary structure, homodimer.

Its subcellular location is the cytoplasm. The polypeptide is PF03932 family protein CutC (Salmonella typhimurium (strain LT2 / SGSC1412 / ATCC 700720)).